Here is a 105-residue protein sequence, read N- to C-terminus: Flagellar transcriptional regulator FlhD (105 aa).

It belongs to the FlhD family. As to quaternary structure, homodimer; disulfide-linked. Forms a heterohexamer composed of two FlhC and four FlhD subunits. Each FlhC binds a FlhD dimer, forming a heterotrimer, and a hexamer assembles by dimerization of two heterotrimers.

It localises to the cytoplasm. In terms of biological role, functions in complex with FlhC as a master transcriptional regulator that regulates transcription of several flagellar and non-flagellar operons by binding to their promoter region. Activates expression of class 2 flagellar genes, including fliA, which is a flagellum-specific sigma factor that turns on the class 3 genes. Also regulates genes whose products function in a variety of physiological pathways. The protein is Flagellar transcriptional regulator FlhD of Nitrosomonas eutropha (strain DSM 101675 / C91 / Nm57).